A 237-amino-acid polypeptide reads, in one-letter code: MTPQAFYLALEQAGFALTNHQKEQFDTYFKLLIDWNRKINLTAITEENEVYLKHFYDSVAPLLQGYIPNEPLRLLDIGAGAGFPSIPMKIMFPKLDVTIIDSLNKRIQFLQLLAKELGLEGVHFYHGRAEDFGQDKQFRGQFDLVTARAVARMQILSELTIPFLKIKGKLIALKAQAADQELEEAKKALQLLFAKVLDHQPYQLPNGDARYITLVEKKKETPNKYPRKAGIPNKKPL.

S-adenosyl-L-methionine is bound by residues glycine 78, phenylalanine 83, 129–130, and arginine 148; that span reads AE.

This sequence belongs to the methyltransferase superfamily. RNA methyltransferase RsmG family.

It is found in the cytoplasm. Functionally, specifically methylates the N7 position of a guanine in 16S rRNA. The sequence is that of Ribosomal RNA small subunit methyltransferase G from Streptococcus equi subsp. zooepidemicus (strain H70).